A 7705-amino-acid polypeptide reads, in one-letter code: Copine family protein 2 (7705 aa).

Disordered regions lie at residues 1 to 61 (MNDY…RHSE), 269 to 360 (KEGN…NNSQ), 372 to 408 (SERK…HQQP), 464 to 492 (GDRA…TSSV), 506 to 538 (STEP…TADG), 560 to 614 (DERA…QGPP), 1301 to 1358 (NRSE…DQQV), 4381 to 4427 (ELEP…RSES), and 6779 to 6800 (RDEH…GKFT). The segment covering 12 to 25 (SSQKSNNQKISNNS) has biased composition (low complexity). Residues 269-282 (KEGNNPSCCRERGT) are compositionally biased toward basic and acidic residues. Positions 302 to 313 (STSTKVAVTSAS) are enriched in low complexity. The span at 318 to 336 (IKDHKKQLKKEKEKKKKMD) shows a compositional bias: basic residues. Residues 372–404 (SERKTAKQREQELLQRSERRSGGRTHSHEEYRR) are compositionally biased toward basic and acidic residues. Polar residues predominate over residues 522 to 532 (ASLSSVQQKQP). Basic and acidic residues predominate over residues 560–587 (DERAKDFLRGDRSSRLSPQSERKNERQI). Residues 588–597 (QIRQQSSGPT) are compositionally biased toward polar residues. Basic and acidic residues-rich tracts occupy residues 598–611 (NRRE…EKRQ) and 1301–1335 (NRSE…HTSE). Residues 4397-4409 (RQSRVYRSSSQVR) show a composition bias toward low complexity. 2 stretches are compositionally biased toward basic and acidic residues: residues 4411 to 4427 (PSEE…RSES) and 6779 to 6797 (RDEH…RDGG). The region spanning 7475–7673 (NLIFGIDYTK…FHKVMFNAPN (199 aa)) is the VWFA domain.

The protein belongs to the copine family. Expressed in body wall muscle.

The chain is Copine family protein 2 (cpna-2) from Caenorhabditis elegans.